The primary structure comprises 123 residues: UPF0102 protein CLD_2200 (123 aa).

It belongs to the UPF0102 family.

In Clostridium botulinum (strain Okra / Type B1), this protein is UPF0102 protein CLD_2200.